The chain runs to 126 residues: Protein ApaG (126 aa).

The ApaG domain occupies 2-126; the sequence is RRKPYELKVE…FSLAIPRRLH (125 aa).

This Methylococcus capsulatus (strain ATCC 33009 / NCIMB 11132 / Bath) protein is Protein ApaG.